A 149-amino-acid polypeptide reads, in one-letter code: Probable flagellum biosynthesis repressor protein FlbT (149 aa).

This sequence belongs to the FlbT family.

In terms of biological role, has a post-transcriptional repressor function in flagellum biogenesis. Associates with the 5'-UTR of fljK mRNA and promotes its degradation. In Sinorhizobium medicae (strain WSM419) (Ensifer medicae), this protein is Probable flagellum biosynthesis repressor protein FlbT.